Reading from the N-terminus, the 317-residue chain is Cyclin-T1-3 (317 aa).

The protein belongs to the cyclin family. Cyclin T subfamily. As to quaternary structure, interacts with CDKC-1 and CDKC-2. As to expression, abundantly expressed in flowers. Expressed in roots, seedlings, rosettes and stems.

This chain is Cyclin-T1-3 (CYCT1-3), found in Arabidopsis thaliana (Mouse-ear cress).